The following is a 102-amino-acid chain: Small ribosomal subunit protein bS18 (102 aa).

This sequence belongs to the bacterial ribosomal protein bS18 family. As to quaternary structure, part of the 30S ribosomal subunit. Forms a tight heterodimer with protein bS6.

Binds as a heterodimer with protein bS6 to the central domain of the 16S rRNA, where it helps stabilize the platform of the 30S subunit. The sequence is that of Small ribosomal subunit protein bS18 from Orientia tsutsugamushi (strain Boryong) (Rickettsia tsutsugamushi).